Reading from the N-terminus, the 420-residue chain is RING finger protein 39 (420 aa).

The segment at 88-135 adopts an RING-type zinc-finger fold; sequence CPLCGGSFEDPVLLACEHSFCRACLARRWGTPPATDTEASPTACPCCG. 2 disordered regions span residues 166-186 and 246-265; these read PGAR…CLDP and DRRS…DGPK. The region spanning 210–420 is the B30.2/SPRY domain; sequence DDLPEDYPVV…APLRIVPAES (211 aa).

It is found in the cytoplasm. The catalysed reaction is S-ubiquitinyl-[E2 ubiquitin-conjugating enzyme]-L-cysteine + [acceptor protein]-L-lysine = [E2 ubiquitin-conjugating enzyme]-L-cysteine + N(6)-ubiquitinyl-[acceptor protein]-L-lysine.. Its pathway is protein modification; protein ubiquitination. Plays an inhibitory role in anti-RNA viral innate immunity by targeting the adapter DDX3X and promoting its 'Lys-48'-linked polyubiquitination. Alternatively, enhances the cGAS-STING pathway activation by promoting 'Lys-63'-linked ubiquitination of STING1, facilitating the STING1-TBK1 complex formation and STING1 activation. The sequence is that of RING finger protein 39 (RNF39) from Macaca mulatta (Rhesus macaque).